A 68-amino-acid chain; its full sequence is Protein transport protein Sec61 subunit gamma (68 aa).

Residues 1–32 are Cytoplasmic-facing; the sequence is MDQVTKFIEPGRQFAKDSIRLVKRCTKPDRKE. Residues 33 to 61 form a helical membrane-spanning segment; sequence FQKIAVATAIGFCIMGFIGFFVKLIHIPI. At 62–68 the chain is on the extracellular side; that stretch reads NNIIVGS.

This sequence belongs to the SecE/SEC61-gamma family. As to quaternary structure, heterotrimeric complex composed of SEC61-alpha, SEC61-beta and SEC61-gamma.

It is found in the endoplasmic reticulum membrane. Functionally, necessary for protein translocation in the endoplasmic reticulum. The chain is Protein transport protein Sec61 subunit gamma (SEC61G) from Gryllotalpa orientalis (Oriental mole cricket).